A 275-amino-acid polypeptide reads, in one-letter code: Ribosomal protein L11 methyltransferase (275 aa).

T123, G146, D167, and N208 together coordinate S-adenosyl-L-methionine.

The protein belongs to the methyltransferase superfamily. PrmA family.

It localises to the cytoplasm. The enzyme catalyses L-lysyl-[protein] + 3 S-adenosyl-L-methionine = N(6),N(6),N(6)-trimethyl-L-lysyl-[protein] + 3 S-adenosyl-L-homocysteine + 3 H(+). Functionally, methylates ribosomal protein L11. The sequence is that of Ribosomal protein L11 methyltransferase from Campylobacter fetus subsp. fetus (strain 82-40).